Consider the following 59-residue polypeptide: UPF0434 protein Pnec_0311 (59 aa).

The protein belongs to the UPF0434 family.

The chain is UPF0434 protein Pnec_0311 from Polynucleobacter necessarius subsp. necessarius (strain STIR1).